We begin with the raw amino-acid sequence, 159 residues long: Ribosome maturation factor RimP (159 aa).

It belongs to the RimP family.

It is found in the cytoplasm. Functionally, required for maturation of 30S ribosomal subunits. This Geotalea daltonii (strain DSM 22248 / JCM 15807 / FRC-32) (Geobacter daltonii) protein is Ribosome maturation factor RimP.